The following is a 331-amino-acid chain: UPF0194 membrane protein YbhG (331 aa).

An N-terminal signal peptide occupies residues 1-19 (MKKPVVIGLAIAAIVTVIA). Residues 107–208 (EEIAQAAAAV…LDLQDTTLIA (102 aa)) are a coiled coil.

This sequence belongs to the UPF0194 family.

Its subcellular location is the periplasm. The polypeptide is UPF0194 membrane protein YbhG (Salmonella arizonae (strain ATCC BAA-731 / CDC346-86 / RSK2980)).